The primary structure comprises 287 residues: 2-dehydro-3-deoxyphosphooctonate aldolase (287 aa).

Belongs to the KdsA family.

Its subcellular location is the cytoplasm. It catalyses the reaction D-arabinose 5-phosphate + phosphoenolpyruvate + H2O = 3-deoxy-alpha-D-manno-2-octulosonate-8-phosphate + phosphate. It functions in the pathway carbohydrate biosynthesis; 3-deoxy-D-manno-octulosonate biosynthesis; 3-deoxy-D-manno-octulosonate from D-ribulose 5-phosphate: step 2/3. It participates in bacterial outer membrane biogenesis; lipopolysaccharide biosynthesis. The chain is 2-dehydro-3-deoxyphosphooctonate aldolase from Caulobacter vibrioides (strain ATCC 19089 / CIP 103742 / CB 15) (Caulobacter crescentus).